A 457-amino-acid chain; its full sequence is Bifunctional protein GlmU (457 aa).

The segment at 1-230 is pyrophosphorylase; sequence MPLSLPLHIV…PREVEGVNDL (230 aa). UDP-N-acetyl-alpha-D-glucosamine contacts are provided by residues 12–15, K26, Q78, 83–84, 105–107, G140, E155, N170, and N228; these read LAAG, GT, and YGD. D107 is a Mg(2+) binding site. N228 is a binding site for Mg(2+). Residues 231–251 are linker; the sequence is WQLTQLERTWQIRAARALCLQ. Residues 252–457 form an N-acetyltransferase region; sequence GARVADPARL…DGWQRPKKKT (206 aa). UDP-N-acetyl-alpha-D-glucosamine-binding residues include R334 and K352. The active-site Proton acceptor is H364. UDP-N-acetyl-alpha-D-glucosamine contacts are provided by Y367 and N378. Acetyl-CoA is bound by residues A381, 387–388, S406, A424, and R441; that span reads NY.

The protein in the N-terminal section; belongs to the N-acetylglucosamine-1-phosphate uridyltransferase family. In the C-terminal section; belongs to the transferase hexapeptide repeat family. Homotrimer. It depends on Mg(2+) as a cofactor.

It localises to the cytoplasm. It carries out the reaction alpha-D-glucosamine 1-phosphate + acetyl-CoA = N-acetyl-alpha-D-glucosamine 1-phosphate + CoA + H(+). The enzyme catalyses N-acetyl-alpha-D-glucosamine 1-phosphate + UTP + H(+) = UDP-N-acetyl-alpha-D-glucosamine + diphosphate. The protein operates within nucleotide-sugar biosynthesis; UDP-N-acetyl-alpha-D-glucosamine biosynthesis; N-acetyl-alpha-D-glucosamine 1-phosphate from alpha-D-glucosamine 6-phosphate (route II): step 2/2. Its pathway is nucleotide-sugar biosynthesis; UDP-N-acetyl-alpha-D-glucosamine biosynthesis; UDP-N-acetyl-alpha-D-glucosamine from N-acetyl-alpha-D-glucosamine 1-phosphate: step 1/1. It participates in bacterial outer membrane biogenesis; LPS lipid A biosynthesis. Catalyzes the last two sequential reactions in the de novo biosynthetic pathway for UDP-N-acetylglucosamine (UDP-GlcNAc). The C-terminal domain catalyzes the transfer of acetyl group from acetyl coenzyme A to glucosamine-1-phosphate (GlcN-1-P) to produce N-acetylglucosamine-1-phosphate (GlcNAc-1-P), which is converted into UDP-GlcNAc by the transfer of uridine 5-monophosphate (from uridine 5-triphosphate), a reaction catalyzed by the N-terminal domain. The protein is Bifunctional protein GlmU of Xylella fastidiosa (strain M12).